The sequence spans 223 residues: Probable Brix domain-containing ribosomal biogenesis protein (223 aa).

Positions 1 to 196 constitute a Brix domain; it reads MMLITTSHRP…IWIMEDGRRW (196 aa).

Probably involved in the biogenesis of the ribosome. This Pyrococcus furiosus (strain ATCC 43587 / DSM 3638 / JCM 8422 / Vc1) protein is Probable Brix domain-containing ribosomal biogenesis protein.